A 158-amino-acid chain; its full sequence is NAD(P)H-quinone oxidoreductase subunit J, chloroplastic (158 aa).

The protein belongs to the complex I 30 kDa subunit family. As to quaternary structure, NDH is composed of at least 16 different subunits, 5 of which are encoded in the nucleus.

The protein localises to the plastid. It localises to the chloroplast thylakoid membrane. It carries out the reaction a plastoquinone + NADH + (n+1) H(+)(in) = a plastoquinol + NAD(+) + n H(+)(out). The enzyme catalyses a plastoquinone + NADPH + (n+1) H(+)(in) = a plastoquinol + NADP(+) + n H(+)(out). NDH shuttles electrons from NAD(P)H:plastoquinone, via FMN and iron-sulfur (Fe-S) centers, to quinones in the photosynthetic chain and possibly in a chloroplast respiratory chain. The immediate electron acceptor for the enzyme in this species is believed to be plastoquinone. Couples the redox reaction to proton translocation, and thus conserves the redox energy in a proton gradient. The polypeptide is NAD(P)H-quinone oxidoreductase subunit J, chloroplastic (Lemna minor (Common duckweed)).